The primary structure comprises 245 residues: Thiopurine S-methyltransferase (245 aa).

Phosphoserine is present on Ser-14. S-adenosyl-L-methionine is bound at residue 29–40 (WQDKWVNGKTAF). Phe-40 contributes to the substrate binding site. An N6-acetyllysine modification is found at Lys-58. S-adenosyl-L-methionine-binding positions include Leu-69, Glu-90, 134-135 (SI), and Arg-152.

This sequence belongs to the class I-like SAM-binding methyltransferase superfamily. TPMT family. Monomer.

It is found in the cytoplasm. It catalyses the reaction S-adenosyl-L-methionine + a thiopurine = S-adenosyl-L-homocysteine + a thiopurine S-methylether.. This Gorilla gorilla gorilla (Western lowland gorilla) protein is Thiopurine S-methyltransferase (TPMT).